The following is a 953-amino-acid chain: UvrABC system protein A (953 aa).

ATP is bound at residue G33–S40. ABC transporter domains lie at W320 to I599 and G619 to K949. An ATP-binding site is contributed by G652 to S659. The segment at C752–C778 adopts a C4-type zinc-finger fold.

The protein belongs to the ABC transporter superfamily. UvrA family. Forms a heterotetramer with UvrB during the search for lesions.

It localises to the cytoplasm. The UvrABC repair system catalyzes the recognition and processing of DNA lesions. UvrA is an ATPase and a DNA-binding protein. A damage recognition complex composed of 2 UvrA and 2 UvrB subunits scans DNA for abnormalities. When the presence of a lesion has been verified by UvrB, the UvrA molecules dissociate. In Rickettsia prowazekii (strain Madrid E), this protein is UvrABC system protein A.